Reading from the N-terminus, the 84-residue chain is DNA-directed RNA polymerase subunit Rpo5 (84 aa).

It belongs to the archaeal Rpo5/eukaryotic RPB5 RNA polymerase subunit family. As to quaternary structure, part of the RNA polymerase complex.

It localises to the cytoplasm. It carries out the reaction RNA(n) + a ribonucleoside 5'-triphosphate = RNA(n+1) + diphosphate. In terms of biological role, DNA-dependent RNA polymerase (RNAP) catalyzes the transcription of DNA into RNA using the four ribonucleoside triphosphates as substrates. This is DNA-directed RNA polymerase subunit Rpo5 from Saccharolobus islandicus (strain Y.N.15.51 / Yellowstone #2) (Sulfolobus islandicus).